Here is a 479-residue protein sequence, read N- to C-terminus: NAC domain-containing protein 45 (479 aa).

An NAC domain is found at 6–157; sequence LPPGFRFHPT…AYALCRVFKK (152 aa). Residues 105 to 163 mediate DNA binding; it reads IGTKKTLVYYRGRAPHGIRTGWVMHEYRLDETECEPSAYGMQDAYALCRVFKKIVIEAK.

Expressed in a few sieve element cells before enucleation and in phloem-pole pericycle cells.

The protein resides in the nucleus. Functionally, transcription factor directing sieve element enucleation and cytosol degradation. Not required for formation of lytic vacuoles. Regulates, with NAC086, the transcription of NEN1, NEN2, NEN3, NEN4, RTM1, RTM2, UBP16, PLDZETA, ABCB10 and At1g26450. The polypeptide is NAC domain-containing protein 45 (Arabidopsis thaliana (Mouse-ear cress)).